We begin with the raw amino-acid sequence, 207 residues long: Thiamine-phosphate synthase (207 aa).

Residues 36-40 and N68 contribute to the 4-amino-2-methyl-5-(diphosphooxymethyl)pyrimidine site; that span reads QLRMK. Mg(2+)-binding residues include D69 and D88. Position 106 (S106) interacts with 4-amino-2-methyl-5-(diphosphooxymethyl)pyrimidine. Residue 132–134 participates in 2-[(2R,5Z)-2-carboxy-4-methylthiazol-5(2H)-ylidene]ethyl phosphate binding; the sequence is TNT. K135 lines the 4-amino-2-methyl-5-(diphosphooxymethyl)pyrimidine pocket. 2-[(2R,5Z)-2-carboxy-4-methylthiazol-5(2H)-ylidene]ethyl phosphate-binding positions include G162 and 182–183; that span reads VS.

It belongs to the thiamine-phosphate synthase family. The cofactor is Mg(2+).

It catalyses the reaction 2-[(2R,5Z)-2-carboxy-4-methylthiazol-5(2H)-ylidene]ethyl phosphate + 4-amino-2-methyl-5-(diphosphooxymethyl)pyrimidine + 2 H(+) = thiamine phosphate + CO2 + diphosphate. The enzyme catalyses 2-(2-carboxy-4-methylthiazol-5-yl)ethyl phosphate + 4-amino-2-methyl-5-(diphosphooxymethyl)pyrimidine + 2 H(+) = thiamine phosphate + CO2 + diphosphate. The catalysed reaction is 4-methyl-5-(2-phosphooxyethyl)-thiazole + 4-amino-2-methyl-5-(diphosphooxymethyl)pyrimidine + H(+) = thiamine phosphate + diphosphate. It participates in cofactor biosynthesis; thiamine diphosphate biosynthesis; thiamine phosphate from 4-amino-2-methyl-5-diphosphomethylpyrimidine and 4-methyl-5-(2-phosphoethyl)-thiazole: step 1/1. In terms of biological role, condenses 4-methyl-5-(beta-hydroxyethyl)thiazole monophosphate (THZ-P) and 2-methyl-4-amino-5-hydroxymethyl pyrimidine pyrophosphate (HMP-PP) to form thiamine monophosphate (TMP). This chain is Thiamine-phosphate synthase, found in Methanococcus maripaludis (strain C5 / ATCC BAA-1333).